The sequence spans 247 residues: MRRDYTLYLFAALGTFLIAYIAVPIAVIFLKQASDVEMLVKTLHDPYVIEAIRNSLLTATATALIALLFGVPLGYVLARKDFPGKSAVQALVDVPIVIPHSVVGIMLLVTFSNSILDSYKGIVAAMLFVSAPFTINAARDGFLAVDEKLEAVARTLGASRWRAFLSISLPMAFPSIASGAIMTWARAISEVGAILIVAYYPKTAQVLILEYFNNYGLRASRPIAVIMVSLSLGIFVILRWLVGRKNA.

Residues 1–8 lie on the Cytoplasmic side of the membrane; the sequence is MRRDYTLY. Residues 9 to 29 traverse the membrane as a helical segment; sequence LFAALGTFLIAYIAVPIAVIF. At 30 to 55 the chain is on the extracellular side; the sequence is LKQASDVEMLVKTLHDPYVIEAIRNS. The region spanning 52–238 is the ABC transmembrane type-1 domain; that stretch reads IRNSLLTATA…SLSLGIFVIL (187 aa). A helical transmembrane segment spans residues 56–76; sequence LLTATATALIALLFGVPLGYV. Topologically, residues 77 to 90 are cytoplasmic; the sequence is LARKDFPGKSAVQA. Residues 91-111 traverse the membrane as a helical segment; that stretch reads LVDVPIVIPHSVVGIMLLVTF. Over 112–114 the chain is Extracellular; sequence SNS. A helical transmembrane segment spans residues 115–135; sequence ILDSYKGIVAAMLFVSAPFTI. The Cytoplasmic segment spans residues 136–163; it reads NAARDGFLAVDEKLEAVARTLGASRWRA. Residues 164 to 184 traverse the membrane as a helical segment; it reads FLSISLPMAFPSIASGAIMTW. At 185-222 the chain is on the extracellular side; the sequence is ARAISEVGAILIVAYYPKTAQVLILEYFNNYGLRASRP. A helical transmembrane segment spans residues 223–243; the sequence is IAVIMVSLSLGIFVILRWLVG. Residues 244–247 lie on the Cytoplasmic side of the membrane; the sequence is RKNA.

This sequence belongs to the binding-protein-dependent transport system permease family. In terms of assembly, the complex is composed of two ATP-binding proteins (WtpC), two transmembrane proteins (WtpB) and a solute-binding protein (WtpA).

The protein localises to the cell membrane. In terms of biological role, part of the ABC transporter complex WtpABC involved in molybdate/tungstate import. Probably responsible for the translocation of the substrate across the membrane. The chain is Molybdate/tungstate transport system permease protein WtpB (wtpB) from Thermococcus kodakarensis (strain ATCC BAA-918 / JCM 12380 / KOD1) (Pyrococcus kodakaraensis (strain KOD1)).